Reading from the N-terminus, the 122-residue chain is Large ribosomal subunit protein uL14 (122 aa).

This sequence belongs to the universal ribosomal protein uL14 family. As to quaternary structure, part of the 50S ribosomal subunit. Forms a cluster with proteins L3 and L19. In the 70S ribosome, L14 and L19 interact and together make contacts with the 16S rRNA in bridges B5 and B8.

Binds to 23S rRNA. Forms part of two intersubunit bridges in the 70S ribosome. The polypeptide is Large ribosomal subunit protein uL14 (Azoarcus sp. (strain BH72)).